A 130-amino-acid chain; its full sequence is Putative antitoxin VapB50 (130 aa).

Possibly the antitoxin component of a type II toxin-antitoxin (TA) system. Its cognate toxin is VapC50. In Mycobacterium tuberculosis (strain ATCC 25618 / H37Rv), this protein is Putative antitoxin VapB50.